We begin with the raw amino-acid sequence, 123 residues long: Small ribosomal subunit protein uS12 (123 aa).

Residues 1–31 (MPTINQLIRKPREAQKARDKAPALQASPQKR) form a disordered region. Residues 10–21 (KPREAQKARDKA) show a composition bias toward basic and acidic residues. Asp89 bears the 3-methylthioaspartic acid mark.

Belongs to the universal ribosomal protein uS12 family. Part of the 30S ribosomal subunit. Contacts proteins S8 and S17. May interact with IF1 in the 30S initiation complex.

With S4 and S5 plays an important role in translational accuracy. Its function is as follows. Interacts with and stabilizes bases of the 16S rRNA that are involved in tRNA selection in the A site and with the mRNA backbone. Located at the interface of the 30S and 50S subunits, it traverses the body of the 30S subunit contacting proteins on the other side and probably holding the rRNA structure together. The combined cluster of proteins S8, S12 and S17 appears to hold together the shoulder and platform of the 30S subunit. The polypeptide is Small ribosomal subunit protein uS12 (Xanthobacter autotrophicus (strain ATCC BAA-1158 / Py2)).